The sequence spans 310 residues: Ribosomal RNA small subunit methyltransferase H (310 aa).

Residues 32 to 34 (AGH), aspartate 52, phenylalanine 79, aspartate 100, and glutamine 107 each bind S-adenosyl-L-methionine.

This sequence belongs to the methyltransferase superfamily. RsmH family.

It is found in the cytoplasm. The enzyme catalyses cytidine(1402) in 16S rRNA + S-adenosyl-L-methionine = N(4)-methylcytidine(1402) in 16S rRNA + S-adenosyl-L-homocysteine + H(+). Specifically methylates the N4 position of cytidine in position 1402 (C1402) of 16S rRNA. The chain is Ribosomal RNA small subunit methyltransferase H from Bacillus pumilus (strain SAFR-032).